Reading from the N-terminus, the 102-residue chain is Putative ribosomal protein uL13-like (102 aa).

Belongs to the universal ribosomal protein uL13 family.

The sequence is that of Putative ribosomal protein uL13-like (RPL13AP3) from Homo sapiens (Human).